A 537-amino-acid chain; its full sequence is CTP synthase (537 aa).

Residues 1 to 268 (MSTKYIFVTG…DQIVCDHLKL (268 aa)) form an amidoligase domain region. Ser14 provides a ligand contact to CTP. Ser14 serves as a coordination point for UTP. Residue 15–20 (SIGKGI) coordinates ATP. Tyr55 contributes to the L-glutamine binding site. Position 72 (Asp72) interacts with ATP. The Mg(2+) site is built by Asp72 and Glu142. CTP is bound by residues 149–151 (DIE), 189–194 (KTKPTQ), and Lys225. UTP is bound by residues 189 to 194 (KTKPTQ) and Lys225. The 244-residue stretch at 293-536 (RIALVGKYVE…VTAAVEKSSD (244 aa)) folds into the Glutamine amidotransferase type-1 domain. Gly355 is a binding site for L-glutamine. The active-site Nucleophile; for glutamine hydrolysis is the Cys382. Residues 383 to 386 (LGMQ), Glu406, and Arg464 contribute to the L-glutamine site. Residues His509 and Glu511 contribute to the active site.

This sequence belongs to the CTP synthase family. As to quaternary structure, homotetramer.

The catalysed reaction is UTP + L-glutamine + ATP + H2O = CTP + L-glutamate + ADP + phosphate + 2 H(+). It carries out the reaction L-glutamine + H2O = L-glutamate + NH4(+). It catalyses the reaction UTP + NH4(+) + ATP = CTP + ADP + phosphate + 2 H(+). It participates in pyrimidine metabolism; CTP biosynthesis via de novo pathway; CTP from UDP: step 2/2. With respect to regulation, allosterically activated by GTP, when glutamine is the substrate; GTP has no effect on the reaction when ammonia is the substrate. The allosteric effector GTP functions by stabilizing the protein conformation that binds the tetrahedral intermediate(s) formed during glutamine hydrolysis. Inhibited by the product CTP, via allosteric rather than competitive inhibition. Functionally, catalyzes the ATP-dependent amination of UTP to CTP with either L-glutamine or ammonia as the source of nitrogen. Regulates intracellular CTP levels through interactions with the four ribonucleotide triphosphates. This is CTP synthase from Streptococcus sanguinis (strain SK36).